A 215-amino-acid polypeptide reads, in one-letter code: Peptide methionine sulfoxide reductase MsrA (215 aa).

Residue cysteine 57 is part of the active site.

The protein belongs to the MsrA Met sulfoxide reductase family.

It carries out the reaction L-methionyl-[protein] + [thioredoxin]-disulfide + H2O = L-methionyl-(S)-S-oxide-[protein] + [thioredoxin]-dithiol. The catalysed reaction is [thioredoxin]-disulfide + L-methionine + H2O = L-methionine (S)-S-oxide + [thioredoxin]-dithiol. Its function is as follows. Has an important function as a repair enzyme for proteins that have been inactivated by oxidation. Catalyzes the reversible oxidation-reduction of methionine sulfoxide in proteins to methionine. The polypeptide is Peptide methionine sulfoxide reductase MsrA (Saccharophagus degradans (strain 2-40 / ATCC 43961 / DSM 17024)).